Here is a 371-residue protein sequence, read N- to C-terminus: Protease PrtS (371 aa).

H169 is a Zn(2+) binding site. E170 is a catalytic residue. Zn(2+)-binding residues include H173 and E193. Residue H273 is the Proton donor of the active site. Residues 352-371 (KEEDKDKGKDEGKDKAETKV) are disordered.

It belongs to the peptidase M4 family. Zn(2+) serves as cofactor.

The protein localises to the secreted. Inhibited by 8 mM 1,10-phenanthroline, but not by EDTA or PMSF. Functionally, metalloprotease involved in the inhibition of insect antibacterial peptides. Reduces the antibacterial activity of G.mellonella hemolymph by 50%. Reduces the antibacterial activity of cecropin A by 80% and completely inhibits cecropin B. The protein is Protease PrtS of Photorhabdus sp. (strain Az29).